The following is a 469-amino-acid chain: Sulfate adenylyltransferase subunit 1 (469 aa).

Residues 22–236 (KDMLRVLTCG…LLNTVSVEQD (215 aa)) enclose the tr-type G domain. Residues 31 to 38 (GSVDDGKS) are G1. 31-38 (GSVDDGKS) serves as a coordination point for GTP. A G2 region spans residues 89-93 (GITID). Residues 110-113 (DTPG) form a G3 region. GTP-binding positions include 110–114 (DTPGH) and 165–168 (NKMD). The G4 stretch occupies residues 165-168 (NKMD). Positions 202 to 204 (SAL) are G5.

This sequence belongs to the TRAFAC class translation factor GTPase superfamily. Classic translation factor GTPase family. CysN/NodQ subfamily. Heterodimer composed of CysD, the smaller subunit, and CysN.

It catalyses the reaction sulfate + ATP + H(+) = adenosine 5'-phosphosulfate + diphosphate. It participates in sulfur metabolism; hydrogen sulfide biosynthesis; sulfite from sulfate: step 1/3. In terms of biological role, with CysD forms the ATP sulfurylase (ATPS) that catalyzes the adenylation of sulfate producing adenosine 5'-phosphosulfate (APS) and diphosphate, the first enzymatic step in sulfur assimilation pathway. APS synthesis involves the formation of a high-energy phosphoric-sulfuric acid anhydride bond driven by GTP hydrolysis by CysN coupled to ATP hydrolysis by CysD. The sequence is that of Sulfate adenylyltransferase subunit 1 from Shewanella woodyi (strain ATCC 51908 / MS32).